The chain runs to 549 residues: ATP synthase subunit alpha (549 aa).

Residue 172–179 (GDRKTGKT) participates in ATP binding. The segment at 513 to 549 (SSTGESVVPDEHVEAMDEEDLGKESVKVKKPAPQKKK) is disordered. The segment covering 540 to 549 (VKKPAPQKKK) has biased composition (basic residues).

This sequence belongs to the ATPase alpha/beta chains family. As to quaternary structure, F-type ATPases have 2 components, CF(1) - the catalytic core - and CF(0) - the membrane proton channel. CF(1) has five subunits: alpha(3), beta(3), gamma(1), delta(1), epsilon(1). CF(0) has three main subunits: a(1), b(2) and c(9-12). The alpha and beta chains form an alternating ring which encloses part of the gamma chain. CF(1) is attached to CF(0) by a central stalk formed by the gamma and epsilon chains, while a peripheral stalk is formed by the delta and b chains.

The protein localises to the cell membrane. It catalyses the reaction ATP + H2O + 4 H(+)(in) = ADP + phosphate + 5 H(+)(out). Its function is as follows. Produces ATP from ADP in the presence of a proton gradient across the membrane. The alpha chain is a regulatory subunit. The chain is ATP synthase subunit alpha from Mycobacterium marinum (strain ATCC BAA-535 / M).